The primary structure comprises 187 residues: Accessory gene regulator protein B (187 aa).

5 helical membrane-spanning segments follow: residues 49 to 69, 82 to 102, 107 to 127, 143 to 163, and 164 to 184; these read IAYILNIFIFTLITNISFYLI, FWCYIESITLFIVLPLLVLHF, TLMMFLALISVGVVIKYAPAA, YFSIIISTILFIITLFVKEPY, and TQFIQLGIIIQAITLLPIYYS.

Belongs to the AgrB family.

It is found in the cell membrane. In terms of biological role, essential for the production of a quorum sensing system signal molecule, the autoinducing peptide (AIP). This quorum sensing system is responsible for the regulation of the expression of virulence factor genes. Involved in the proteolytic processing of AgrD, the precursor of AIP. The polypeptide is Accessory gene regulator protein B (Staphylococcus aureus (strain MW2)).